A 120-amino-acid chain; its full sequence is MFLLHEYDIFWAFLIISSVIPILAFLISGVLAPIREGPEKLSSYESGIEPMGDAWLQFRIRYYMFALVFVVFDVETVFLYPWAMSFDVLGVSVFIEALIFVLIPIVGSVYAWRKGALEWS.

The next 3 helical transmembrane spans lie at 9–29 (IFWA…LISG), 64–84 (MFAL…PWAM), and 88–108 (VLGV…IVGS).

It belongs to the complex I subunit 3 family. As to quaternary structure, NDH is composed of at least 16 different subunits, 5 of which are encoded in the nucleus.

The protein localises to the plastid. It is found in the chloroplast thylakoid membrane. It carries out the reaction a plastoquinone + NADH + (n+1) H(+)(in) = a plastoquinol + NAD(+) + n H(+)(out). It catalyses the reaction a plastoquinone + NADPH + (n+1) H(+)(in) = a plastoquinol + NADP(+) + n H(+)(out). Its function is as follows. NDH shuttles electrons from NAD(P)H:plastoquinone, via FMN and iron-sulfur (Fe-S) centers, to quinones in the photosynthetic chain and possibly in a chloroplast respiratory chain. The immediate electron acceptor for the enzyme in this species is believed to be plastoquinone. Couples the redox reaction to proton translocation, and thus conserves the redox energy in a proton gradient. This Calycanthus floridus var. glaucus (Eastern sweetshrub) protein is NAD(P)H-quinone oxidoreductase subunit 3, chloroplastic.